Consider the following 297-residue polypeptide: tRNA pseudouridine synthase B (297 aa).

Catalysis depends on aspartate 44, which acts as the Nucleophile.

It belongs to the pseudouridine synthase TruB family. Type 1 subfamily.

It catalyses the reaction uridine(55) in tRNA = pseudouridine(55) in tRNA. Responsible for synthesis of pseudouridine from uracil-55 in the psi GC loop of transfer RNAs. The sequence is that of tRNA pseudouridine synthase B from Corynebacterium efficiens (strain DSM 44549 / YS-314 / AJ 12310 / JCM 11189 / NBRC 100395).